A 284-amino-acid chain; its full sequence is Formamidopyrimidine-DNA glycosylase (284 aa).

Proline 2 (schiff-base intermediate with DNA) is an active-site residue. Glutamate 3 serves as the catalytic Proton donor. Residue lysine 60 is the Proton donor; for beta-elimination activity of the active site. Positions 99, 118, and 163 each coordinate DNA. The segment at 248-282 adopts an FPG-type zinc-finger fold; sequence WVYGRQGQPCRTCGQTIERIKLVGRSTHFCPQCQP. Catalysis depends on arginine 272, which acts as the Proton donor; for delta-elimination activity.

The protein belongs to the FPG family. In terms of assembly, monomer. The cofactor is Zn(2+).

The enzyme catalyses Hydrolysis of DNA containing ring-opened 7-methylguanine residues, releasing 2,6-diamino-4-hydroxy-5-(N-methyl)formamidopyrimidine.. It carries out the reaction 2'-deoxyribonucleotide-(2'-deoxyribose 5'-phosphate)-2'-deoxyribonucleotide-DNA = a 3'-end 2'-deoxyribonucleotide-(2,3-dehydro-2,3-deoxyribose 5'-phosphate)-DNA + a 5'-end 5'-phospho-2'-deoxyribonucleoside-DNA + H(+). Its function is as follows. Involved in base excision repair of DNA damaged by oxidation or by mutagenic agents. Acts as a DNA glycosylase that recognizes and removes damaged bases. Has a preference for oxidized purines, such as 7,8-dihydro-8-oxoguanine (8-oxoG). Has AP (apurinic/apyrimidinic) lyase activity and introduces nicks in the DNA strand. Cleaves the DNA backbone by beta-delta elimination to generate a single-strand break at the site of the removed base with both 3'- and 5'-phosphates. This is Formamidopyrimidine-DNA glycosylase from Acaryochloris marina (strain MBIC 11017).